Here is a 567-residue protein sequence, read N- to C-terminus: ETHYLENE INSENSITIVE 3-like 3 protein (567 aa).

Residues Asn24–Met44 are a coiled coil. Disordered stretches follow at residues Lys55–Lys81 and Ile286–Leu393. Basic and acidic residues predominate over residues Glu69–Gln79. A DNA-binding region spans residues Ser162–Gln288. Positions Ile286 to Thr299 are enriched in polar residues. Residues Glu300 to Lys312 are compositionally biased toward basic and acidic residues. Residues Lys363–Ile372 are compositionally biased toward basic residues.

This sequence belongs to the EIN3 family. As to quaternary structure, interacts with MYB72.

The protein localises to the nucleus. Functionally, probable transcription factor that may be involved in the ethylene response pathway. The protein is ETHYLENE INSENSITIVE 3-like 3 protein (EIL3) of Arabidopsis thaliana (Mouse-ear cress).